The sequence spans 219 residues: Adenylate kinase (219 aa).

An ATP-binding site is contributed by 10–15; it reads GAGKGT. The NMP stretch occupies residues 30 to 59; it reads STGDMLRAAIREGTELGLKAKSVMESGGLV. Residues threonine 31, arginine 36, 57-59, 85-88, and glutamine 92 contribute to the AMP site; these read GLV and GFPR. The LID stretch occupies residues 122 to 159; sequence GRRQHPASGRVYHIEYNPPKVEGKDDVTGEELVQRPDD. ATP contacts are provided by residues arginine 123 and 132 to 133; that span reads VY. Residues arginine 156 and arginine 167 each contribute to the AMP site. Arginine 202 contributes to the ATP binding site.

The protein belongs to the adenylate kinase family. As to quaternary structure, monomer.

It is found in the cytoplasm. It carries out the reaction AMP + ATP = 2 ADP. Its pathway is purine metabolism; AMP biosynthesis via salvage pathway; AMP from ADP: step 1/1. Functionally, catalyzes the reversible transfer of the terminal phosphate group between ATP and AMP. Plays an important role in cellular energy homeostasis and in adenine nucleotide metabolism. The sequence is that of Adenylate kinase from Acinetobacter baylyi (strain ATCC 33305 / BD413 / ADP1).